Reading from the N-terminus, the 645-residue chain is Cytoplasmic dynein 1 intermediate chain 1 (645 aa).

2 stretches are compositionally biased toward basic and acidic residues: residues 1-13 and 20-58; these read MSDK…ELER and QIRE…KRRE. Disordered stretches follow at residues 1–58 and 96–125; these read MSDK…KRRE and MSPS…RTLQ. S2 is modified (N-acetylserine). The interaction with DCTN1 stretch occupies residues 2-123; sequence SDKSDLKAEL…SGDLGPLTRT (122 aa). Phosphoserine occurs at positions 50 and 100. Low complexity predominate over residues 96–107; sequence MSPSSKSVSTPS. T105 is subject to Phosphothreonine. Residues S107, S111, and S114 each carry the phosphoserine modification. Residues 147-163 form an interaction with DYNLT1 region; that stretch reads KLGVSKVTQVDFLPREV. The disordered stretch occupies residues 169–221; that stretch reads ETQTPLATHQSEEDEEDEEMVESKVGQDSELENQDKKQEVKEAPPRELTEEEK. Phosphothreonine is present on T176. Residues S179 and S197 each carry the phosphoserine modification. The span at 189-221 shows a compositional bias: basic and acidic residues; it reads VESKVGQDSELENQDKKQEVKEAPPRELTEEEK. 7 WD repeats span residues 285–334, 338–378, 387–428, 437–477, 482–527, 530–570, and 576–615; these read SKHR…TTPE, HCQS…RTPV, AHTH…TPQE, SKPV…AGIG, GHQG…PLYS, DNAD…EVPT, and EGAS…VPHN. A Phosphoserine modification is found at S635.

The protein belongs to the dynein intermediate chain family. As to quaternary structure, homodimer. The cytoplasmic dynein 1 complex consists of two catalytic heavy chains (HCs) and a number of non-catalytic subunits presented by intermediate chains (ICs), light intermediate chains (LICs) and light chains (LCs); the composition seems to vary in respect to the IC, LIC and LC composition. The heavy chain homodimer serves as a scaffold for the probable homodimeric assembly of the respective non-catalytic subunits. The ICs and LICs bind directly to the HC dimer and the LCs assemble on the IC dimer. Interacts with DYNC1H1. Interacts with DYNLT1 and DYNLT3. Interacts with DCTN1. Interacts with MCRS1; the interaction is required for the proper distribution of centriolar satellites.

Its subcellular location is the cytoplasm. The protein localises to the chromosome. The protein resides in the centromere. It is found in the kinetochore. It localises to the cytoskeleton. Its subcellular location is the spindle pole. Its function is as follows. Acts as one of several non-catalytic accessory components of the cytoplasmic dynein 1 complex that are thought to be involved in linking dynein to cargos and to adapter proteins that regulate dynein function. Cytoplasmic dynein 1 acts as a motor for the intracellular retrograde motility of vesicles and organelles along microtubules. The intermediate chains mediate the binding of dynein to dynactin via its 150 kDa component (p150-glued) DCTN1. May play a role in mediating the interaction of cytoplasmic dynein with membranous organelles and kinetochores. The protein is Cytoplasmic dynein 1 intermediate chain 1 (DYNC1I1) of Homo sapiens (Human).